The following is a 56-amino-acid chain: Large ribosomal subunit protein bL33B (56 aa).

Belongs to the bacterial ribosomal protein bL33 family.

The chain is Large ribosomal subunit protein bL33B from Cutibacterium acnes (strain DSM 16379 / KPA171202) (Propionibacterium acnes).